The following is a 397-amino-acid chain: Aromatic-amino-acid aminotransferase (397 aa).

Positions 34, 66, 131, and 184 each coordinate substrate. N6-(pyridoxal phosphate)lysine is present on K247. The substrate site is built by R281 and R375.

The protein belongs to the class-I pyridoxal-phosphate-dependent aminotransferase family. In terms of assembly, homodimer. The cofactor is pyridoxal 5'-phosphate.

It is found in the cytoplasm. The catalysed reaction is an aromatic L-alpha-amino acid + 2-oxoglutarate = an aromatic oxo-acid + L-glutamate. The enzyme catalyses (3S)-3-methyl-L-phenylalanine + 2-oxoglutarate = (3S)-2-oxo-3-phenylbutanoate + L-glutamate. It functions in the pathway amino-acid biosynthesis; L-phenylalanine biosynthesis; L-phenylalanine from phenylpyruvate (ArAT route): step 1/1. The protein operates within amino-acid biosynthesis; L-tyrosine biosynthesis; L-tyrosine from (4-hydroxyphenyl)pyruvate: step 1/1. Its function is as follows. Broad-specificity enzyme that catalyzes the transamination of 2-ketoisocaproate, p-hydroxyphenylpyruvate, and phenylpyruvate to yield leucine, tyrosine, and phenylalanine, respectively. In vitro, is able to catalyze the conversion of beta-methyl phenylpyruvate to the nonproteinogenic amino acid (2S,3S)-beta-methyl-phenylalanine, a building block of the antibiotic mannopeptimycin produced by Streptomyces hygroscopicus NRRL3085. The chain is Aromatic-amino-acid aminotransferase (tyrB) from Escherichia coli (strain K12).